We begin with the raw amino-acid sequence, 305 residues long: MSKKLTFQEIILTLQQFWNDQGCMLMQAYDNEKGAGTMSPYTFLRAIGPEPWNAAYVEPSRRPADGRYGENPNRLYQHHQFQVVMKPSPSNIQELYLESLEKLGINPLEHDIRFVEDNWENPSTGSAGLGWEVWLDGMEITQFTYFQQVGGLATGPVTAEVTYGLERLASYIQEVDSVYDIEWADGVKYGEIFIQPEYEHSKYSFEISDQEILLENFDKFEKEAGRALEEGLVHPAYDYVLKCSHTFNLLDARGAVSVTERAGYIARIRNLARVVAKTFVAERKRLGYPLLDEETRVKLLAEDAE.

This sequence belongs to the class-II aminoacyl-tRNA synthetase family. In terms of assembly, tetramer of two alpha and two beta subunits.

Its subcellular location is the cytoplasm. It catalyses the reaction tRNA(Gly) + glycine + ATP = glycyl-tRNA(Gly) + AMP + diphosphate. The chain is Glycine--tRNA ligase alpha subunit from Streptococcus pneumoniae (strain P1031).